Consider the following 362-residue polypeptide: Aminomethyltransferase (362 aa).

The protein belongs to the GcvT family. The glycine cleavage system is composed of four proteins: P, T, L and H.

It catalyses the reaction N(6)-[(R)-S(8)-aminomethyldihydrolipoyl]-L-lysyl-[protein] + (6S)-5,6,7,8-tetrahydrofolate = N(6)-[(R)-dihydrolipoyl]-L-lysyl-[protein] + (6R)-5,10-methylene-5,6,7,8-tetrahydrofolate + NH4(+). In terms of biological role, the glycine cleavage system catalyzes the degradation of glycine. This chain is Aminomethyltransferase, found in Chlorobium limicola (strain DSM 245 / NBRC 103803 / 6330).